We begin with the raw amino-acid sequence, 764 residues long: 1,4-alpha-glucan branching enzyme GlgB (764 aa).

The active-site Nucleophile is Asp-431. Glu-484 serves as the catalytic Proton donor.

The protein belongs to the glycosyl hydrolase 13 family. GlgB subfamily. Monomer.

It carries out the reaction Transfers a segment of a (1-&gt;4)-alpha-D-glucan chain to a primary hydroxy group in a similar glucan chain.. It functions in the pathway glycan biosynthesis; glycogen biosynthesis. Catalyzes the formation of the alpha-1,6-glucosidic linkages in glycogen by scission of a 1,4-alpha-linked oligosaccharide from growing alpha-1,4-glucan chains and the subsequent attachment of the oligosaccharide to the alpha-1,6 position. This is 1,4-alpha-glucan branching enzyme GlgB from Synechococcus sp. (strain CC9902).